A 258-amino-acid chain; its full sequence is F-box/SPRY domain-containing protein 1 (258 aa).

In terms of domain architecture, F-box spans 6 to 54 (TEYAPDIPDNVLELIFSYLKLQDLRNCSLVCKSWNRFLNDENNEVWRAQ). The B30.2/SPRY domain occupies 64 to 256 (FKTDLLSVVP…ISMVYLGPPL (193 aa)).

The protein belongs to the FBXO45/Fsn family. As to quaternary structure, component of an E3 ubiquitin ligase complex composed of hiw and Fsn.

Its subcellular location is the synapse. Its pathway is protein modification; protein ubiquitination. Its function is as follows. Required in the presynaptic motoneuron to down-regulate the levels of wnd and restrain synaptic terminal growth at the neuromuscular junction (NMJ). This is F-box/SPRY domain-containing protein 1 from Aedes aegypti (Yellowfever mosquito).